A 440-amino-acid polypeptide reads, in one-letter code: Histidinol dehydrogenase (440 aa).

The NAD(+) site is built by Y139, Q200, and N223. Substrate-binding residues include S246, Q268, and H271. Zn(2+) contacts are provided by Q268 and H271. Residues E336 and H337 each act as proton acceptor in the active site. Positions 337, 370, 424, and 429 each coordinate substrate. Residue D370 participates in Zn(2+) binding. H429 contacts Zn(2+).

The protein belongs to the histidinol dehydrogenase family. The cofactor is Zn(2+).

It carries out the reaction L-histidinol + 2 NAD(+) + H2O = L-histidine + 2 NADH + 3 H(+). The protein operates within amino-acid biosynthesis; L-histidine biosynthesis; L-histidine from 5-phospho-alpha-D-ribose 1-diphosphate: step 9/9. Its function is as follows. Catalyzes the sequential NAD-dependent oxidations of L-histidinol to L-histidinaldehyde and then to L-histidine. The chain is Histidinol dehydrogenase from Bordetella bronchiseptica (strain ATCC BAA-588 / NCTC 13252 / RB50) (Alcaligenes bronchisepticus).